We begin with the raw amino-acid sequence, 682 residues long: Tetratricopeptide repeat protein 39B (682 aa).

2 TPR repeats span residues 393–426 (SLVL…QEEW) and 626–659 (PFTL…YKDY).

It belongs to the TTC39 family.

Regulates high density lipoprotein (HDL) cholesterol metabolism by promoting the ubiquitination and degradation of the oxysterols receptors LXR (NR1H2 and NR1H3). This Homo sapiens (Human) protein is Tetratricopeptide repeat protein 39B.